We begin with the raw amino-acid sequence, 526 residues long: Phosphoenolpyruvate carboxykinase (ATP) (526 aa).

Residues R55, Y190, and K196 each contribute to the substrate site. Residues K196, H215, and 231–239 (GLSGTGKTT) each bind ATP. Residues K196 and H215 each coordinate Mn(2+). Residue D252 participates in Mn(2+) binding. 3 residues coordinate ATP: E280, R317, and T442. Substrate is bound at residue R317.

The protein belongs to the phosphoenolpyruvate carboxykinase (ATP) family. Mn(2+) is required as a cofactor.

The protein resides in the cytoplasm. The enzyme catalyses oxaloacetate + ATP = phosphoenolpyruvate + ADP + CO2. Its pathway is carbohydrate biosynthesis; gluconeogenesis. In terms of biological role, involved in the gluconeogenesis. Catalyzes the conversion of oxaloacetate (OAA) to phosphoenolpyruvate (PEP) through direct phosphoryl transfer between the nucleoside triphosphate and OAA. This chain is Phosphoenolpyruvate carboxykinase (ATP), found in Alkaliphilus oremlandii (strain OhILAs) (Clostridium oremlandii (strain OhILAs)).